We begin with the raw amino-acid sequence, 326 residues long: Protein MICROTUBULE BINDING PROTEIN 2C (326 aa).

2 stretches are compositionally biased toward polar residues: residues 1–15 (MYEQ…QSDS) and 34–46 (PHQS…SGNE). Disordered regions lie at residues 1-46 (MYEQ…SGNE) and 71-132 (ERSS…KALA). A coiled-coil region spans residues 132–183 (AGAEKEEMSRLREQVNDLQTKLSEKEEVLKSMEMSKNQVNEIQEKLEATNRL).

It belongs to the microtubule binding protein 2C family. Interacts with STM. In terms of tissue distribution, expressed in seedlings, roots, flowers and developing ovules.

The protein resides in the cytoplasm. Its subcellular location is the cytoskeleton. Functionally, prevents homeodomain proteins (e.g. STM) association to plasmodesmata and, consequently, cell-to-cell transport. Binds to RNA. Alters STM RNA binding capacity. Regulates cytoskeleton (e.g. actin) organization that determinates cell shape. Regulates stomata patterning and drought tolerance. Involved in restricting tobamovirus (e.g. oilseed rape mosaic virus) infectivity, probably by interfering with cell-to-cell virus movement. The protein is Protein MICROTUBULE BINDING PROTEIN 2C of Arabidopsis thaliana (Mouse-ear cress).